The sequence spans 175 residues: MSFATTNKTIVPCATTKQIVRPRFLSNGTISKSRAMMVWEPFNNKFFETFSYLPPLTDDQITKQVDYILRNNWTPCLEFAGSDQAYVTHDNTVRMGDCASTYQDNRYWTMWKLPMFGCIDGSQVLTEISACTKAFPDAYIRLVCFDANRQVQISGFLVHRPESATDYRLPADRQV.

Residues 1-34 (MSFATTNKTIVPCATTKQIVRPRFLSNGTISKSR) constitute a chloroplast transit peptide.

The protein belongs to the RuBisCO small chain family. In terms of assembly, heterohexadecamer of 8 large and 8 small subunits.

Its subcellular location is the plastid. The protein resides in the chloroplast. Functionally, ruBisCO catalyzes two reactions: the carboxylation of D-ribulose 1,5-bisphosphate, the primary event in carbon dioxide fixation, as well as the oxidative fragmentation of the pentose substrate. Both reactions occur simultaneously and in competition at the same active site. Although the small subunit is not catalytic it is essential for maximal activity. The polypeptide is Ribulose bisphosphate carboxylase small subunit, chloroplastic (Batophora oerstedii (Green alga)).